The chain runs to 228 residues: Leucyl/phenylalanyl-tRNA--protein transferase (228 aa).

The protein belongs to the L/F-transferase family.

It is found in the cytoplasm. It carries out the reaction N-terminal L-lysyl-[protein] + L-leucyl-tRNA(Leu) = N-terminal L-leucyl-L-lysyl-[protein] + tRNA(Leu) + H(+). The enzyme catalyses N-terminal L-arginyl-[protein] + L-leucyl-tRNA(Leu) = N-terminal L-leucyl-L-arginyl-[protein] + tRNA(Leu) + H(+). It catalyses the reaction L-phenylalanyl-tRNA(Phe) + an N-terminal L-alpha-aminoacyl-[protein] = an N-terminal L-phenylalanyl-L-alpha-aminoacyl-[protein] + tRNA(Phe). Functions in the N-end rule pathway of protein degradation where it conjugates Leu, Phe and, less efficiently, Met from aminoacyl-tRNAs to the N-termini of proteins containing an N-terminal arginine or lysine. The protein is Leucyl/phenylalanyl-tRNA--protein transferase of Thiobacillus denitrificans (strain ATCC 25259 / T1).